We begin with the raw amino-acid sequence, 504 residues long: DnaJ homolog subfamily C member 3 (504 aa).

An N-terminal signal peptide occupies residues 1–31; the sequence is MVAPGSVTSRLGSVFPFLLVLVDLQYEGAEC. 9 TPR repeats span residues 37 to 70, 72 to 104, 105 to 138, 154 to 187, 189 to 221, 222 to 255, 268 to 301, 306 to 339, and 340 to 373; these read VEKHLELGKKLLAAGQLADALSQFHAAVDGDPDN, IAYYRRATVFLAMGKSKAALPDLTKVIELKMDF, TAARLQRGHLLLKQGKLDEAEDDFKKVLKSNPSE, MQRLRSQALDAFESSDFTAAITFLDKILEVCVWD, ELRELRAECFIKEGEPRKAISDLKASSKLKNDN, TEAFYKISTLYYELGDHELSLSEVRECLKLDQDH, LNKLIESAEELIKEGRYTDAISKYESVMKTEPGV, IRSKERICHCFSKDEKPVEAIRVCSEVLQVEPDN, and VNALKDRAEAYLIEEMYDEAIQDYETAQEHNEND. Cysteine 248 and cysteine 258 are disulfide-bonded. Serine 274 bears the Phosphoserine mark. Cysteine 313 and cysteine 329 are disulfide-bonded. The flexible linker stretch occupies residues 375 to 393; it reads QIREGLEKAQRLLKQSQRR. Positions 394–462 constitute a J domain; sequence DYYKILGVKR…EMRKKFDDGE (69 aa). The tract at residues 451-481 is disordered; that stretch reads DPEMRKKFDDGEDPLDAESQQGGGGNPFHRS.

As to quaternary structure, interacts with EIF2AK4/GCN2; this interaction occurs under endoplasmic reticulum (ER) stress, hypothermic and amino acid starving stress conditions and inhibits EIF2AK4/GCN2 kinase activity. Interacts with EIF2AK3. Interacts with EIF2AK2. Forms a trimeric complex with DNAJB1 and HSPA8. Interacts with THAP12.

Its subcellular location is the endoplasmic reticulum. Functionally, involved in the unfolded protein response (UPR) during endoplasmic reticulum (ER) stress. Acts as a negative regulator of the EIF2AK4/GCN2 kinase activity by preventing the phosphorylation of eIF-2-alpha at 'Ser-52' and hence attenuating general protein synthesis under ER stress, hypothermic and amino acid starving stress conditions. Co-chaperone of HSPA8/HSC70, it stimulates its ATPase activity. May inhibit both the autophosphorylation of EIF2AK2/PKR and the ability of EIF2AK2 to catalyze phosphorylation of the EIF2A. May inhibit EIF2AK3/PERK activity. The chain is DnaJ homolog subfamily C member 3 (DNAJC3) from Bos taurus (Bovine).